Consider the following 117-residue polypeptide: Large ribosomal subunit protein uL18 (117 aa).

The protein belongs to the universal ribosomal protein uL18 family. Part of the 50S ribosomal subunit; part of the 5S rRNA/L5/L18/L25 subcomplex. Contacts the 5S and 23S rRNAs.

This is one of the proteins that bind and probably mediate the attachment of the 5S RNA into the large ribosomal subunit, where it forms part of the central protuberance. The sequence is that of Large ribosomal subunit protein uL18 from Actinobacillus succinogenes (strain ATCC 55618 / DSM 22257 / CCUG 43843 / 130Z).